Consider the following 303-residue polypeptide: Hemolysin E, chromosomal (303 aa).

Cysteines 87 and 285 form a disulfide. A helical transmembrane segment spans residues 183–203 (AGVVAGPFGLIISYSIAAGVV).

Monomer and oligomer. In periplasm, it is present as a monomer, while in outer membrane vesicles, it oligomerizes to form a pore structure that is active. The pore is formed by a dodecamer. In terms of processing, in periplasm, it forms a disulfide bond between Cys-87 and Cys-285, which prevents the oligomerization. In outer membrane vesicles, the redox status prevents formation of the disulfide bond, leading to oligomerization and pore formation.

It localises to the secreted. Its subcellular location is the periplasm. It is found in the host cell membrane. In terms of biological role, toxin, which has some hemolytic activity towards mammalian cells. Acts by forming a pore-like structure upon contact with mammalian cells. The polypeptide is Hemolysin E, chromosomal (hlyE) (Escherichia coli (strain K12)).